Consider the following 343-residue polypeptide: Zinc finger CCCH domain-containing protein 39 (343 aa).

The stretch at 114-147 (LSHLADAADEAAALRQENAELRVANNDLACRIAK) forms a coiled coil. C3H1-type zinc fingers lie at residues 268-296 (MFKT…HGVA) and 306-334 (RYKT…HSIT).

This chain is Zinc finger CCCH domain-containing protein 39, found in Oryza sativa subsp. japonica (Rice).